Here is a 95-residue protein sequence, read N- to C-terminus: uncharacterized protein (95 aa).

Repeat copies occupy residues 67–74 and 85–92. A 2 X 8 AA approximate repeats region spans residues 67-92; sequence GCGCGCGCATVAAVSPVPCGGCCGCG.

This is an uncharacterized protein from Caenorhabditis elegans.